A 147-amino-acid chain; its full sequence is uncharacterized protein (147 aa).

Residues 1–59 form the Response regulatory domain; sequence MGAELVKWVKSHKIDAHIITFVAKMPYIDSIKLLEAGAKGCVWKTSHPAKLNRAIDSIS. Residues 78–143 enclose the HTH luxR-type domain; the sequence is RYSSDNQLTN…ELIKTALRMG (66 aa). Positions 102–121 form a DNA-binding region, H-T-H motif; it reads NKEIANFLQLSRKTVETHRL.

Overexpressed protein is phosphorylated in vitro by non-cognate histidine kinases BarA and UhpB.

This is an uncharacterized protein from Escherichia coli (strain K12).